The chain runs to 380 residues: Pregnancy-associated glycoprotein 6 (380 aa).

The first 15 residues, M1–C15, serve as a signal peptide directing secretion. The propeptide at I16 to F53 is activation peptide. N57 and N74 each carry an N-linked (GlcNAc...) asparagine glycan. The 307-residue stretch at Y71–A377 folds into the Peptidase A1 domain. Residue D89 is part of the active site. Cysteines 102 and 107 form a disulfide. A glycan (N-linked (GlcNAc...) asparagine) is linked at N125. C261 and C265 form a disulfide bridge. The active site involves D270. An intrachain disulfide couples C303 to C337.

This sequence belongs to the peptidase A1 family. In terms of tissue distribution, trophoblast and placental tissue. Produced specifically in the invasive binucleate cells of the placenta.

The protein localises to the secreted. It is found in the extracellular space. This Ovis aries (Sheep) protein is Pregnancy-associated glycoprotein 6.